The sequence spans 237 residues: Glutathione S-transferase psoE (237 aa).

Residues Val-2 to Thr-79 form the GST N-terminal domain. Positions 37, 49, 50, 63, 64, and 99 each coordinate glutathione. A substrate-binding site is contributed by Lys-49. Residues Asp-84–Thr-222 form the GST C-terminal domain. Gln-108 contacts substrate. The segment covering Glu-208–Thr-222 has biased composition (basic and acidic residues). The interval Glu-208–Ala-237 is disordered.

It belongs to the GST superfamily. Requires glutathione as cofactor.

The protein operates within secondary metabolite biosynthesis. Glutathione S-transferase; part of the gene cluster that mediates the biosynthesis of pseurotin A, a competitive inhibitor of chitin synthase and an inducer of nerve-cell proliferation. The PKS-NRPS hybrid synthetase psoA is responsible for the biosynthesis of azaspirene, one of the first intermediates having the 1-oxa-7-azaspiro[4,4]-non-2-ene-4,6-dione core of pseurotin, via condensation of one acetyl-CoA, 4 malonyl-CoA, and a L-phenylalanine molecule. The dual-functional monooxygenase/methyltransferase psoF seems to be involved in the addition of the C3 methyl group onto the pseurotin scaffold. Azaspirene is then converted to synerazol through 4 steps including oxidation of C17 by the cytochrome P450 monooxygenase psoD, O-methylation of the hydroxy group of C8 by the methyltransferase psoC, and the trans-to-cis isomerization of the C13 olefin by the glutathione S-transferase psoE. The fourth step of synerazol production is performed by the dual-functional monooxygenase/methyltransferase psoF which seems to catalyze the epoxidation of the intermediate deepoxy-synerazol. Synerazol can be attacked by a water molecule nonenzymatically at two different positions to yield two diol products, pseurotin A and pseurotin D. The polypeptide is Glutathione S-transferase psoE (Aspergillus fumigatus (strain ATCC MYA-4609 / CBS 101355 / FGSC A1100 / Af293) (Neosartorya fumigata)).